The sequence spans 267 residues: MRILVEIAYQGNNFLGFQIQQNGRTVQQQFEKLLQRMHKRHVRIHPSSRTDRGVHAIQQYFHFDTELNIPMSQWQYAMNRTLPDDIYVNNVVTVDDDFHCRYDCVGKRYRYKVYQAQHRDPFQSGLKTFIPETLDLDKMNRAAQQFIGTHDFTGFCSQKTEVESKVRTLYQSEIVKTDDGFDYIVTGSGFLYNMVRVLVAFLIEVGKGRHEISDVPKLLESKNRKNVPFTATAEGLYLEKIYLDENELLKDFGNDIKIHRKKSLQND.

Residue aspartate 51 is the Nucleophile of the active site. Tyrosine 109 contributes to the substrate binding site.

It belongs to the tRNA pseudouridine synthase TruA family. As to quaternary structure, homodimer.

The enzyme catalyses uridine(38/39/40) in tRNA = pseudouridine(38/39/40) in tRNA. Its function is as follows. Formation of pseudouridine at positions 38, 39 and 40 in the anticodon stem and loop of transfer RNAs. The protein is tRNA pseudouridine synthase A of Staphylococcus aureus (strain MSSA476).